Consider the following 168-residue polypeptide: Secreted RxLR effector protein RXLR-C06 (168 aa).

A signal peptide spans 1 to 22; it reads MRIQLLWLSFAVLSTILSTCDA. A disordered region spans residues 25-52; sequence DKLDPQRVQPNQNGSGHNQSIRSALKTS. Over residues 32–50 the composition is skewed to polar residues; that stretch reads VQPNQNGSGHNQSIRSALK. N-linked (GlcNAc...) asparagine glycans are attached at residues Asn37 and Asn42. Positions 46 to 63 match the RxLR-dEER motif; that stretch reads RSALKTSHGKTIADDEER. In terms of domain architecture, IQ spans 78 to 107; sequence YKAIVAKLSKYFRDYHERREIRKQRILNKS. An N-linked (GlcNAc...) asparagine glycan is attached at Asn105.

The protein belongs to the RxLR effector family.

Its subcellular location is the secreted. The protein resides in the host Golgi apparatus. Functionally, secreted effector that suppresses pattern-triggered immunity (PTI) in plant host. The polypeptide is Secreted RxLR effector protein RXLR-C06 (Plasmopara halstedii (Downy mildew of sunflower)).